The sequence spans 282 residues: ATP synthase gamma chain (282 aa).

The protein belongs to the ATPase gamma chain family. As to quaternary structure, F-type ATPases have 2 components, CF(1) - the catalytic core - and CF(0) - the membrane proton channel. CF(1) has five subunits: alpha(3), beta(3), gamma(1), delta(1), epsilon(1). CF(0) has three main subunits: a, b and c.

Its subcellular location is the cell membrane. In terms of biological role, produces ATP from ADP in the presence of a proton gradient across the membrane. The gamma chain is believed to be important in regulating ATPase activity and the flow of protons through the CF(0) complex. The protein is ATP synthase gamma chain of Clostridium botulinum (strain 657 / Type Ba4).